A 123-amino-acid chain; its full sequence is Ribosome-binding factor A (123 aa).

It belongs to the RbfA family. Monomer. Binds 30S ribosomal subunits, but not 50S ribosomal subunits or 70S ribosomes.

The protein resides in the cytoplasm. One of several proteins that assist in the late maturation steps of the functional core of the 30S ribosomal subunit. Associates with free 30S ribosomal subunits (but not with 30S subunits that are part of 70S ribosomes or polysomes). Required for efficient processing of 16S rRNA. May interact with the 5'-terminal helix region of 16S rRNA. This chain is Ribosome-binding factor A, found in Solibacter usitatus (strain Ellin6076).